The primary structure comprises 436 residues: Trigger factor (436 aa).

The 86-residue stretch at 163 to 248 (DDRIVLDFAG…VKEVAEAVLP (86 aa)) folds into the PPIase FKBP-type domain.

It belongs to the FKBP-type PPIase family. Tig subfamily.

The protein resides in the cytoplasm. It carries out the reaction [protein]-peptidylproline (omega=180) = [protein]-peptidylproline (omega=0). Functionally, involved in protein export. Acts as a chaperone by maintaining the newly synthesized protein in an open conformation. Functions as a peptidyl-prolyl cis-trans isomerase. The chain is Trigger factor from Bordetella avium (strain 197N).